Here is a 92-residue protein sequence, read N- to C-terminus: UPF0223 protein SUB0967 (92 aa).

This sequence belongs to the UPF0223 family.

This Streptococcus uberis (strain ATCC BAA-854 / 0140J) protein is UPF0223 protein SUB0967.